Consider the following 314-residue polypeptide: Porphobilinogen deaminase (314 aa).

S-(dipyrrolylmethanemethyl)cysteine is present on Cys249.

This sequence belongs to the HMBS family. In terms of assembly, monomer. Requires dipyrromethane as cofactor.

It catalyses the reaction 4 porphobilinogen + H2O = hydroxymethylbilane + 4 NH4(+). The protein operates within porphyrin-containing compound metabolism; protoporphyrin-IX biosynthesis; coproporphyrinogen-III from 5-aminolevulinate: step 2/4. Its function is as follows. Tetrapolymerization of the monopyrrole PBG into the hydroxymethylbilane pre-uroporphyrinogen in several discrete steps. The protein is Porphobilinogen deaminase of Brucella abortus (strain S19).